We begin with the raw amino-acid sequence, 1124 residues long: Angiopoietin-1 receptor (1124 aa).

An N-terminal signal peptide occupies residues M1–G22. Topologically, residues A23–L748 are extracellular. Residues C44 and C102 are joined by a disulfide bond. Residues C44–S123 enclose the Ig-like C2-type 1 domain. N-linked (GlcNAc...) asparagine glycans are attached at residues N140 and N158. EGF-like domains are found at residues R210–E252, A254–N299, and A301–E341. 13 cysteine pairs are disulfide-bonded: C211/C220, C224/C233, C227/C240, C242/C251, C255/C264, C268/C274, C280/C287, C289/C298, C302/C311, C315/C323, C317/C329, C331/C340, and C370/C424. The region spanning P350–S440 is the Ig-like C2-type 2 domain. N-linked (GlcNAc...) asparagine glycans are attached at residues N399, N438, N464, N560, N596, N649, and N691. 3 consecutive Fibronectin type-III domains span residues P447–I541, P545–D636, and Q641–S735. The helical transmembrane segment at I749–I769 threads the bilayer. Topologically, residues L770–A1124 are cytoplasmic. The Protein kinase domain occupies I824–L1096. Residues I830–V838 and K855 each bind ATP. At Y860 the chain carries Phosphotyrosine; by autocatalysis. D964 acts as the Proton acceptor in catalysis. 3 positions are modified to phosphotyrosine; by autocatalysis: Y992, Y1102, and Y1108.

It belongs to the protein kinase superfamily. Tyr protein kinase family. Tie subfamily. As to quaternary structure, homodimer. Heterodimer with TIE1. Interacts with ANGPT1, ANGPT2 and ANGPT4. At cell-cell contacts in quiescent cells, forms a signaling complex composed of ANGPT1 plus TEK molecules from two adjoining cells. In the absence of endothelial cell-cell contacts, interaction with ANGPT1 mediates contacts with the extracellular matrix. Interacts with PTPRB; this promotes endothelial cell-cell adhesion. Interacts with DOK2, GRB2, GRB7, GRB14, PIK3R1 and PTPN11/SHP2. Colocalizes with DOK2 at contacts with the extracellular matrix in migrating cells. Interacts (tyrosine phosphorylated) with TNIP2. Interacts (tyrosine phosphorylated) with SHC1 (via SH2 domain). Proteolytic processing leads to the shedding of the extracellular domain (soluble TIE-2 alias sTIE-2). Post-translationally, autophosphorylated on tyrosine residues in response to ligand binding. Autophosphorylation occurs in trans, i.e. one subunit of the dimeric receptor phosphorylates tyrosine residues on the other subunit. Autophosphorylation occurs in a sequential manner, where Tyr-992 in the kinase activation loop is phosphorylated first, followed by autophosphorylation at Tyr-1108 and at additional tyrosine residues. ANGPT1-induced phosphorylation is impaired during hypoxia, due to increased expression of ANGPT2. Phosphorylation is important for interaction with GRB14, PIK3R1 and PTPN11. Phosphorylation at Tyr-1102 is important for interaction with SHC1, GRB2 and GRB7. Phosphorylation at Tyr-1108 is important for interaction with DOK2 and for coupling to downstream signal transduction pathways in endothelial cells. Dephosphorylated by PTPRB. In terms of processing, ubiquitinated. The phosphorylated receptor is ubiquitinated and internalized, leading to its degradation. In terms of tissue distribution, detected in umbilical vein endothelial cells. Proteolytic processing gives rise to a soluble extracellular domain that is detected in blood plasma (at protein level). Predominantly expressed in endothelial cells and their progenitors, the angioblasts. Has been directly found in placenta and lung, with a lower level in umbilical vein endothelial cells, brain and kidney.

The protein localises to the cell membrane. It is found in the cell junction. Its subcellular location is the focal adhesion. It localises to the cytoplasm. The protein resides in the cytoskeleton. The protein localises to the secreted. It carries out the reaction L-tyrosyl-[protein] + ATP = O-phospho-L-tyrosyl-[protein] + ADP + H(+). Angiopoietin binding leads to receptor dimerization and activation by autophosphorylation at Tyr-992 on the kinase activation loop. Inhibited by staurosporine, K252a, PP2, damnacanthal, SB203580, CEP-11207, CEP-11981 and CE-245677. Inhibited by triazine, thienopyrimidine and thiazolopyrimidine derivatives. In terms of biological role, tyrosine-protein kinase that acts as a cell-surface receptor for ANGPT1, ANGPT2 and ANGPT4 and regulates angiogenesis, endothelial cell survival, proliferation, migration, adhesion and cell spreading, reorganization of the actin cytoskeleton, but also maintenance of vascular quiescence. Has anti-inflammatory effects by preventing the leakage of pro-inflammatory plasma proteins and leukocytes from blood vessels. Required for normal angiogenesis and heart development during embryogenesis. Required for post-natal hematopoiesis. After birth, activates or inhibits angiogenesis, depending on the context. Inhibits angiogenesis and promotes vascular stability in quiescent vessels, where endothelial cells have tight contacts. In quiescent vessels, ANGPT1 oligomers recruit TEK to cell-cell contacts, forming complexes with TEK molecules from adjoining cells, and this leads to preferential activation of phosphatidylinositol 3-kinase and the AKT1 signaling cascades. In migrating endothelial cells that lack cell-cell adhesions, ANGT1 recruits TEK to contacts with the extracellular matrix, leading to the formation of focal adhesion complexes, activation of PTK2/FAK and of the downstream kinases MAPK1/ERK2 and MAPK3/ERK1, and ultimately to the stimulation of sprouting angiogenesis. ANGPT1 signaling triggers receptor dimerization and autophosphorylation at specific tyrosine residues that then serve as binding sites for scaffold proteins and effectors. Signaling is modulated by ANGPT2 that has lower affinity for TEK, can promote TEK autophosphorylation in the absence of ANGPT1, but inhibits ANGPT1-mediated signaling by competing for the same binding site. Signaling is also modulated by formation of heterodimers with TIE1, and by proteolytic processing that gives rise to a soluble TEK extracellular domain. The soluble extracellular domain modulates signaling by functioning as decoy receptor for angiopoietins. TEK phosphorylates DOK2, GRB7, GRB14, PIK3R1; SHC1 and TIE1. This Homo sapiens (Human) protein is Angiopoietin-1 receptor.